The chain runs to 467 residues: Cysteine protease ATG4a (467 aa).

Residues 1 to 35 (MKALCDRFVPQQCSSSSKSDTHDKSPLVSDSGPSD) are disordered. Residue C170 is the Nucleophile of the active site. Residues D364 and H366 contribute to the active site. Residues 448–467 (NYGFADDDSEDEREDDWQML) are disordered. A compositionally biased stretch (acidic residues) spans 452-467 (ADDDSEDEREDDWQML).

It belongs to the peptidase C54 family. As to quaternary structure, interacts with ATG8. As to expression, constitutively expressed.

It is found in the cytoplasm. The catalysed reaction is [protein]-C-terminal L-amino acid-glycyl-phosphatidylethanolamide + H2O = [protein]-C-terminal L-amino acid-glycine + a 1,2-diacyl-sn-glycero-3-phosphoethanolamine. Cysteine protease that plays a key role in autophagy by mediating both proteolytic activation and delipidation of ATG8 family proteins. The protease activity is required for proteolytic activation of ATG8 family proteins: cleaves the C-terminal amino acid of ATG8 proteins to reveal a C-terminal glycine. Exposure of the glycine at the C-terminus is essential for ATG8 proteins conjugation to phosphatidylethanolamine (PE) and insertion to membranes, which is necessary for autophagy. In addition to the protease activity, also mediates delipidation of PE-conjugated ATG8 proteins. This chain is Cysteine protease ATG4a, found in Arabidopsis thaliana (Mouse-ear cress).